The chain runs to 185 residues: Ribosome-recycling factor (185 aa).

Belongs to the RRF family.

It is found in the cytoplasm. In terms of biological role, responsible for the release of ribosomes from messenger RNA at the termination of protein biosynthesis. May increase the efficiency of translation by recycling ribosomes from one round of translation to another. The polypeptide is Ribosome-recycling factor (Shewanella baltica (strain OS223)).